The sequence spans 452 residues: Isocitrate dehydrogenase [NADP], mitochondrial (452 aa).

The N-terminal 39 residues, Met1–Tyr39, are a transit peptide targeting the mitochondrion. N6-acetyllysine occurs at positions 45, 48, 67, and 69. An N6-acetyllysine; alternate mark is found at Lys80 and Lys106. 2 positions are modified to N6-succinyllysine; alternate: Lys80 and Lys106. Residues Thr115–Thr117 and Arg122 contribute to the NADP(+) site. Residue Thr117 coordinates substrate. Residues Ser134–Arg140 and Arg149 contribute to the substrate site. At Lys155 the chain carries N6-acetyllysine. Lys166 carries the N6-acetyllysine; alternate modification. Lys166 is modified (N6-succinyllysine; alternate). Arg172 is a binding site for substrate. 2 positions are modified to N6-acetyllysine; alternate: Lys180 and Lys193. N6-succinyllysine; alternate occurs at positions 180 and 193. Lys199 carries the post-translational modification N6-acetyllysine. Lys256 carries the N6-acetyllysine; alternate modification. N6-succinyllysine; alternate is present on Lys256. N6-acetyllysine occurs at positions 263, 272, 275, and 280. Lys282 bears the N6-acetyllysine; alternate mark. Lys282 carries the post-translational modification N6-succinyllysine; alternate. Asp291 contributes to the Mn(2+) binding site. NADP(+) is bound at residue Lys299. Asp314 lines the Mn(2+) pocket. NADP(+)-binding positions include Gly349 to His354 and Asn367. An N6-acetyllysine; alternate modification is found at Lys384. Lys384 carries the post-translational modification N6-succinyllysine; alternate. An N6-acetyllysine mark is found at Lys400, Lys413, and Lys442.

Belongs to the isocitrate and isopropylmalate dehydrogenases family. As to quaternary structure, homodimer. Mg(2+) serves as cofactor. It depends on Mn(2+) as a cofactor. Post-translationally, acetylation at Lys-413 dramatically reduces catalytic activity. Deacetylated by SIRT3.

The protein resides in the mitochondrion. The enzyme catalyses D-threo-isocitrate + NADP(+) = 2-oxoglutarate + CO2 + NADPH. Functionally, plays a role in intermediary metabolism and energy production. It may tightly associate or interact with the pyruvate dehydrogenase complex. In Macaca fascicularis (Crab-eating macaque), this protein is Isocitrate dehydrogenase [NADP], mitochondrial (IDH2).